A 125-amino-acid chain; its full sequence is Histone H2A (125 aa).

A compositionally biased stretch (basic residues) spans 1–18; sequence MSGRGKGGKAKGKSKSRS. A disordered region spans residues 1–23; it reads MSGRGKGGKAKGKSKSRSSRAGL. S2 carries the post-translational modification N-acetylserine. Position 2 is a phosphoserine (S2). N5-methylglutamine is present on Q104.

Belongs to the histone H2A family. As to quaternary structure, the nucleosome is a histone octamer containing two molecules each of H2A, H2B, H3 and H4 assembled in one H3-H4 heterotetramer and two H2A-H2B heterodimers. The octamer wraps approximately 147 bp of DNA.

It is found in the nucleus. The protein localises to the chromosome. Core component of nucleosome. Nucleosomes wrap and compact DNA into chromatin, limiting DNA accessibility to the cellular machineries which require DNA as a template. Histones thereby play a central role in transcription regulation, DNA repair, DNA replication and chromosomal stability. DNA accessibility is regulated via a complex set of post-translational modifications of histones, also called histone code, and nucleosome remodeling. This chain is Histone H2A, found in Urechis caupo (Innkeeper worm).